The chain runs to 126 residues: Protein ApaG (126 aa).

The 125-residue stretch at 2 to 126 (SDPRYQIDVS…FRLAVPGALH (125 aa)) folds into the ApaG domain.

The polypeptide is Protein ApaG (Azotobacter vinelandii (strain DJ / ATCC BAA-1303)).